A 440-amino-acid polypeptide reads, in one-letter code: MSYFEHIPEIRYEGPQSDNPLAYRHYDKSKKVLGKTLEEHLRIAVCYWHTFVWPGVDIFGQGTFRRPWQQAGDAMERAQQKADSAFEFFSKLGTPYYTFHDTDVSPEGSNLKEYSENFLRITDYLARKQESTGIKLLWGTANLFSHPRYAAGAATSPDPEVFAFAATQVRHALDATQRLGGDNYVLWGGREGYDTLLNTDLVRERDQLARFLHMVVDHAHKIGFKGSLLIEPKPQEPTKHQYDYDVATVHGFLLQHGLDKEIRVNIEANHATLAGHSFHHEIATAYALGIFGSVDANRGDPQNGWDTDQFPNSVEELTLAFYEILKHGGFTTGGMNFDSKVRRQSVDPEDLFYGHIGAIDNLALAVERAAVLIENDRLDQFKRQRYSGWDAEFGRKISSGDYSLSALAEEAMARGLNPQHASGHQELMENIVNQAIYSGR.

Active-site residues include H100 and D103. Residues E231, E267, H270, D295, D306, D308, and D338 each coordinate Mg(2+).

The protein belongs to the xylose isomerase family. As to quaternary structure, homotetramer. The cofactor is Mg(2+).

It localises to the cytoplasm. The catalysed reaction is alpha-D-xylose = alpha-D-xylulofuranose. This Paraburkholderia phytofirmans (strain DSM 17436 / LMG 22146 / PsJN) (Burkholderia phytofirmans) protein is Xylose isomerase.